The primary structure comprises 393 residues: NAD(P)H-quinone oxidoreductase subunit H, chloroplastic (393 aa).

Belongs to the complex I 49 kDa subunit family. NDH is composed of at least 16 different subunits, 5 of which are encoded in the nucleus.

The protein localises to the plastid. It is found in the chloroplast thylakoid membrane. The enzyme catalyses a plastoquinone + NADH + (n+1) H(+)(in) = a plastoquinol + NAD(+) + n H(+)(out). It carries out the reaction a plastoquinone + NADPH + (n+1) H(+)(in) = a plastoquinol + NADP(+) + n H(+)(out). Its function is as follows. NDH shuttles electrons from NAD(P)H:plastoquinone, via FMN and iron-sulfur (Fe-S) centers, to quinones in the photosynthetic chain and possibly in a chloroplast respiratory chain. The immediate electron acceptor for the enzyme in this species is believed to be plastoquinone. Couples the redox reaction to proton translocation, and thus conserves the redox energy in a proton gradient. The chain is NAD(P)H-quinone oxidoreductase subunit H, chloroplastic from Populus alba (White poplar).